We begin with the raw amino-acid sequence, 194 residues long: Peptidyl-tRNA hydrolase (194 aa).

Tyr-16 serves as a coordination point for tRNA. The Proton acceptor role is filled by His-21. Residues Phe-67, Asn-69, and Asn-115 each coordinate tRNA.

Belongs to the PTH family. In terms of assembly, monomer.

The protein localises to the cytoplasm. It catalyses the reaction an N-acyl-L-alpha-aminoacyl-tRNA + H2O = an N-acyl-L-amino acid + a tRNA + H(+). Functionally, hydrolyzes ribosome-free peptidyl-tRNAs (with 1 or more amino acids incorporated), which drop off the ribosome during protein synthesis, or as a result of ribosome stalling. Its function is as follows. Catalyzes the release of premature peptidyl moieties from peptidyl-tRNA molecules trapped in stalled 50S ribosomal subunits, and thus maintains levels of free tRNAs and 50S ribosomes. The polypeptide is Peptidyl-tRNA hydrolase (Shigella flexneri).